Reading from the N-terminus, the 459-residue chain is Glycosyl hydrolase family 109 protein (459 aa).

A signal peptide (tat-type signal) is located at residues 1–45 (MAGDESRSNPFSRRTLLRTSAAAGAGLGVAGLSTGYGAAQPVRPA). NAD(+) contacts are provided by residues 70–71 (NR), Asp92, 141–144 (WEWH), 161–162 (EC), and Asn190. Substrate-binding positions include Tyr219, Arg238, 250–253 (YPTH), and Tyr332. Tyr250 provides a ligand contact to NAD(+). The interval 440 to 459 (DFTRGRWQTPHPGVDSPKPA) is disordered.

This sequence belongs to the Gfo/Idh/MocA family. Glycosyl hydrolase 109 subfamily. The cofactor is NAD(+). In terms of processing, predicted to be exported by the Tat system. The position of the signal peptide cleavage has not been experimentally proven.

Functionally, glycosidase. The sequence is that of Glycosyl hydrolase family 109 protein from Saccharopolyspora erythraea (strain ATCC 11635 / DSM 40517 / JCM 4748 / NBRC 13426 / NCIMB 8594 / NRRL 2338).